A 306-amino-acid chain; its full sequence is uncharacterized protein (306 aa).

Tyr-51 acts as the Proton donor in catalysis. 197–207 (GPVAKGLLTEK) contacts NADP(+).

This sequence belongs to the aldo/keto reductase family. Aldo/keto reductase 2 subfamily.

This is an uncharacterized protein from Bacillus subtilis (strain 168).